Consider the following 400-residue polypeptide: Nicotinate phosphoribosyltransferase (400 aa).

Residue His-220 is modified to Phosphohistidine; by autocatalysis.

Belongs to the NAPRTase family. Post-translationally, transiently phosphorylated on a His residue during the reaction cycle. Phosphorylation strongly increases the affinity for substrates and increases the rate of nicotinate D-ribonucleotide production. Dephosphorylation regenerates the low-affinity form of the enzyme, leading to product release.

It catalyses the reaction nicotinate + 5-phospho-alpha-D-ribose 1-diphosphate + ATP + H2O = nicotinate beta-D-ribonucleotide + ADP + phosphate + diphosphate. It participates in cofactor biosynthesis; NAD(+) biosynthesis; nicotinate D-ribonucleotide from nicotinate: step 1/1. Catalyzes the synthesis of beta-nicotinate D-ribonucleotide from nicotinate and 5-phospho-D-ribose 1-phosphate at the expense of ATP. This Escherichia coli O157:H7 protein is Nicotinate phosphoribosyltransferase.